A 133-amino-acid polypeptide reads, in one-letter code: UPF0047 protein Rv2556c (133 aa).

Belongs to the UPF0047 family.

The polypeptide is UPF0047 protein Rv2556c (Mycobacterium tuberculosis (strain ATCC 25618 / H37Rv)).